The following is a 73-amino-acid chain: MIIPWQELSTETLDNLIESFVLREGTDYGMQEKTLEQKVADVKKQLVSGEAVLVWSELHESVNIMPAAQFRPD.

This sequence belongs to the UPF0270 family.

This Proteus mirabilis (strain HI4320) protein is UPF0270 protein PMI2817.